Reading from the N-terminus, the 618-residue chain is Proline--tRNA ligase (618 aa).

It belongs to the class-II aminoacyl-tRNA synthetase family. ProS type 1 subfamily. In terms of assembly, homodimer.

The protein localises to the cytoplasm. It catalyses the reaction tRNA(Pro) + L-proline + ATP = L-prolyl-tRNA(Pro) + AMP + diphosphate. Catalyzes the attachment of proline to tRNA(Pro) in a two-step reaction: proline is first activated by ATP to form Pro-AMP and then transferred to the acceptor end of tRNA(Pro). As ProRS can inadvertently accommodate and process non-cognate amino acids such as alanine and cysteine, to avoid such errors it has two additional distinct editing activities against alanine. One activity is designated as 'pretransfer' editing and involves the tRNA(Pro)-independent hydrolysis of activated Ala-AMP. The other activity is designated 'posttransfer' editing and involves deacylation of mischarged Ala-tRNA(Pro). The misacylated Cys-tRNA(Pro) is not edited by ProRS. The chain is Proline--tRNA ligase from Streptococcus equi subsp. zooepidemicus (strain H70).